The sequence spans 802 residues: Spondin-1 (802 aa).

The N-terminal stretch at 1–23 (MAARLRPLALRLLARTFPLVARG) is a signal peptide. The Reelin domain maps to 24-189 (FSDETLEKAA…DSASEGVTDK (166 aa)). 17 cysteine pairs are disulfide-bonded: cysteine 39–cysteine 123, cysteine 151–cysteine 177, cysteine 194–cysteine 331, cysteine 195–cysteine 335, cysteine 197–cysteine 410, cysteine 438–cysteine 475, cysteine 449–cysteine 484, cysteine 454–cysteine 489, cysteine 497–cysteine 533, cysteine 508–cysteine 512, cysteine 543–cysteine 549, cysteine 554–cysteine 590, cysteine 565–cysteine 569, cysteine 600–cysteine 605, cysteine 610–cysteine 645, cysteine 621–cysteine 625, and cysteine 655–cysteine 660. Residues 190-383 (PTLDCCACGT…LTSLDHPQSP (194 aa)) enclose the Spondin domain. An N-linked (GlcNAc...) asparagine glycan is attached at asparagine 209. Aspartate 320, aspartate 349, and aspartate 353 together coordinate Ca(2+). TSP type-1 domains follow at residues 437–490 (TCIY…PGCS), 496–550 (TCMM…EECS), 553–606 (SCLV…PECH), 609–661 (PCLL…PECP), 663–716 (DCEL…RKCL), and 749–801 (VCRL…NVHP). N-linked (GlcNAc...) asparagine glycosylation is present at asparagine 676.

It localises to the secreted. The protein localises to the extracellular space. It is found in the extracellular matrix. In terms of biological role, cell adhesion protein that promotes the attachment of spinal cord and sensory neuron cells and the outgrowth of neurites in vitro. May contribute to the growth and guidance of axons in both the spinal cord and the PNS. Somite-derived spondin 1 is an inhibitory signal involved in patterning the segmental migration of neural crest cells and their topographical segregation within the rostral somites in vitro. May be required to prevent the lateral drifting of the commissural axons after having crossed the floor plate. This Gallus gallus (Chicken) protein is Spondin-1 (SPON1).